We begin with the raw amino-acid sequence, 851 residues long: DNA mismatch repair protein MutS (851 aa).

614–621 (GPNMGGKS) is an ATP binding site.

This sequence belongs to the DNA mismatch repair MutS family.

Functionally, this protein is involved in the repair of mismatches in DNA. It is possible that it carries out the mismatch recognition step. This protein has a weak ATPase activity. The protein is DNA mismatch repair protein MutS of Yersinia enterocolitica serotype O:8 / biotype 1B (strain NCTC 13174 / 8081).